We begin with the raw amino-acid sequence, 511 residues long: Cobyric acid synthase (511 aa).

Positions 251–443 (LLDIAIICLP…IHGIFDNDIF (193 aa)) constitute a GATase cobBQ-type domain. The active-site Nucleophile is Cys-332. His-435 is an active-site residue.

This sequence belongs to the CobB/CobQ family. CobQ subfamily.

It participates in cofactor biosynthesis; adenosylcobalamin biosynthesis. Catalyzes amidations at positions B, D, E, and G on adenosylcobyrinic A,C-diamide. NH(2) groups are provided by glutamine, and one molecule of ATP is hydrogenolyzed for each amidation. In Listeria welshimeri serovar 6b (strain ATCC 35897 / DSM 20650 / CCUG 15529 / CIP 8149 / NCTC 11857 / SLCC 5334 / V8), this protein is Cobyric acid synthase.